A 413-amino-acid polypeptide reads, in one-letter code: MQRDKLREVRGTKDLLGIELYKFQYIHRLSQSIAHRYGFIAVDTPIIEFTEVFTKTLGDDSDIVMKEMYNFQDKSGENITLRPEFTSAIVRVLINKNLIIPVKLFSSGPVFRYERPQKCRQRQFHQVNFEFFGSDLPLADIEMIALGYHILDELKLLDDITLEINFLGDKETMNSYKLSLIEYLNKYKKDLSEDSQRRLITNPLRILDSKAPEDREILLNVPNISYFYSKSSNDFFAEVLYGLDELCIPYKVNHSIVRGLDYYCNTVFEFTTSKLGAQNAVVAGGRYDGLVKSMGGNDTPAVGFAMGVERVSALIDYKHQEPRSVVLIPIGKDAVSYALKLAYELRCNGISVNWNYKNANLRNALRKVGDDNIVLIFGDEELKNNTIQVKDMKTGEQQEIVRCDLLDTLCNKI.

This sequence belongs to the class-II aminoacyl-tRNA synthetase family. Homodimer.

Its subcellular location is the cytoplasm. It carries out the reaction tRNA(His) + L-histidine + ATP = L-histidyl-tRNA(His) + AMP + diphosphate + H(+). This Ehrlichia chaffeensis (strain ATCC CRL-10679 / Arkansas) protein is Histidine--tRNA ligase.